A 197-amino-acid polypeptide reads, in one-letter code: Putative early 21.8 kDa protein (197 aa).

This protein is required for viral late gene expression. This is Putative early 21.8 kDa protein (DA26) from Orgyia pseudotsugata (Douglas-fir tussock moth).